We begin with the raw amino-acid sequence, 610 residues long: Glutamine--fructose-6-phosphate aminotransferase [isomerizing] (610 aa).

The active-site Nucleophile; for GATase activity is the Cys2. In terms of domain architecture, Glutamine amidotransferase type-2 spans 2–219 (CGIVGATSER…EGDVADINRT (218 aa)). SIS domains lie at 287–427 (AADI…YRGM) and 459–600 (LAQD…VDQP). Lys605 (for Fru-6P isomerization activity) is an active-site residue.

In terms of assembly, homodimer.

It is found in the cytoplasm. It catalyses the reaction D-fructose 6-phosphate + L-glutamine = D-glucosamine 6-phosphate + L-glutamate. In terms of biological role, catalyzes the first step in hexosamine metabolism, converting fructose-6P into glucosamine-6P using glutamine as a nitrogen source. In Idiomarina loihiensis (strain ATCC BAA-735 / DSM 15497 / L2-TR), this protein is Glutamine--fructose-6-phosphate aminotransferase [isomerizing].